Consider the following 238-residue polypeptide: Aspartate/glutamate leucyltransferase (238 aa).

Belongs to the R-transferase family. Bpt subfamily.

Its subcellular location is the cytoplasm. The catalysed reaction is N-terminal L-glutamyl-[protein] + L-leucyl-tRNA(Leu) = N-terminal L-leucyl-L-glutamyl-[protein] + tRNA(Leu) + H(+). It catalyses the reaction N-terminal L-aspartyl-[protein] + L-leucyl-tRNA(Leu) = N-terminal L-leucyl-L-aspartyl-[protein] + tRNA(Leu) + H(+). In terms of biological role, functions in the N-end rule pathway of protein degradation where it conjugates Leu from its aminoacyl-tRNA to the N-termini of proteins containing an N-terminal aspartate or glutamate. This chain is Aspartate/glutamate leucyltransferase, found in Shewanella sp. (strain MR-4).